A 124-amino-acid polypeptide reads, in one-letter code: MSEKWGVIHIYASYNNTIIHVTDITGAETIAKISGGMIVKNQKDESSPYAAMQGAFKIADMIREKGIDKVHIKVRATGGSKSKNPGPGAQAAIRALARAGIKIGRIEDATPIPHDGTTPKKGNR.

Belongs to the universal ribosomal protein uS11 family. As to quaternary structure, part of the 30S ribosomal subunit.

Its function is as follows. Located on the platform of the 30S subunit. This is Small ribosomal subunit protein uS11 from Methanococcus aeolicus (strain ATCC BAA-1280 / DSM 17508 / OCM 812 / Nankai-3).